The primary structure comprises 277 residues: NH(3)-dependent NAD(+) synthetase (277 aa).

46–53 (GISGGQDS) is a binding site for ATP. D52 serves as a coordination point for Mg(2+). A deamido-NAD(+)-binding site is contributed by R141. Residue T161 participates in ATP binding. E166 lines the Mg(2+) pocket. Deamido-NAD(+)-binding residues include K174 and D181. The ATP site is built by K190 and T212. Deamido-NAD(+) is bound at residue 262–263 (HK).

The protein belongs to the NAD synthetase family. In terms of assembly, homodimer.

The catalysed reaction is deamido-NAD(+) + NH4(+) + ATP = AMP + diphosphate + NAD(+) + H(+). Its pathway is cofactor biosynthesis; NAD(+) biosynthesis; NAD(+) from deamido-NAD(+) (ammonia route): step 1/1. Functionally, catalyzes the ATP-dependent amidation of deamido-NAD to form NAD. Uses ammonia as a nitrogen source. This Corynebacterium efficiens (strain DSM 44549 / YS-314 / AJ 12310 / JCM 11189 / NBRC 100395) protein is NH(3)-dependent NAD(+) synthetase.